Consider the following 279-residue polypeptide: Diaminopimelate epimerase (279 aa).

3 residues coordinate substrate: N12, Q45, and N65. The active-site Proton donor is the C74. Substrate is bound by residues G75–N76, N162, N195, and E213–R214. C222 acts as the Proton acceptor in catalysis. Residue G223–T224 coordinates substrate.

It belongs to the diaminopimelate epimerase family. Homodimer.

Its subcellular location is the cytoplasm. The catalysed reaction is (2S,6S)-2,6-diaminopimelate = meso-2,6-diaminopimelate. It participates in amino-acid biosynthesis; L-lysine biosynthesis via DAP pathway; DL-2,6-diaminopimelate from LL-2,6-diaminopimelate: step 1/1. Catalyzes the stereoinversion of LL-2,6-diaminopimelate (L,L-DAP) to meso-diaminopimelate (meso-DAP), a precursor of L-lysine and an essential component of the bacterial peptidoglycan. The chain is Diaminopimelate epimerase from Shewanella woodyi (strain ATCC 51908 / MS32).